The following is a 784-amino-acid chain: E3 UFM1-protein ligase 1 homolog (784 aa).

The span at 398-414 (QEVDHGVMEEEKADKRE) shows a compositional bias: basic and acidic residues. The disordered stretch occupies residues 398-472 (QEVDHGVMEE…ASNKKGGKDP (75 aa)).

The protein belongs to the UFL1 family.

E3 UFM1-protein ligase that mediates ufmylation of target proteins. This Anopheles gambiae (African malaria mosquito) protein is E3 UFM1-protein ligase 1 homolog.